A 299-amino-acid chain; its full sequence is Acetylglutamate kinase (299 aa).

Residues 64-65 (GG), arginine 86, and asparagine 197 contribute to the substrate site.

Belongs to the acetylglutamate kinase family. ArgB subfamily.

The protein resides in the cytoplasm. It catalyses the reaction N-acetyl-L-glutamate + ATP = N-acetyl-L-glutamyl 5-phosphate + ADP. Its pathway is amino-acid biosynthesis; L-arginine biosynthesis; N(2)-acetyl-L-ornithine from L-glutamate: step 2/4. Its function is as follows. Catalyzes the ATP-dependent phosphorylation of N-acetyl-L-glutamate. The polypeptide is Acetylglutamate kinase (Sulfurihydrogenibium sp. (strain YO3AOP1)).